A 2262-amino-acid chain; its full sequence is Protein Ycf2 (2262 aa).

An ATP-binding site is contributed by 1607–1614; it reads GFIGTGRS.

This sequence belongs to the Ycf2 family.

It is found in the plastid. It localises to the chloroplast stroma. Probable ATPase of unknown function. Its presence in a non-photosynthetic plant (Epifagus virginiana) and experiments in tobacco indicate that it has an essential function which is probably not related to photosynthesis. The sequence is that of Protein Ycf2 from Nuphar advena (Common spatterdock).